The primary structure comprises 496 residues: tRNA modification GTPase mss1, mitochondrial (496 aa).

A mitochondrion-targeting transit peptide spans 1-19; sequence MRILNRVFLNTFQACFRRF. Positions 239–416 constitute a TrmE-type G domain; that stretch reads GINVAILGPS…FLQALSSTFE (178 aa). GTP is bound by residues 246–253, 293–297, and 363–366; these read GPSNAGKS, DTAGL, and NKVD.

This sequence belongs to the TRAFAC class TrmE-Era-EngA-EngB-Septin-like GTPase superfamily. TrmE GTPase family.

The protein resides in the mitochondrion. GTPase involved in the 5-carboxymethylaminomethyl modification (mnm(5)s(2)U34) of the wobble uridine base in mitochondrial tRNAs. The polypeptide is tRNA modification GTPase mss1, mitochondrial (mss1) (Schizosaccharomyces pombe (strain 972 / ATCC 24843) (Fission yeast)).